We begin with the raw amino-acid sequence, 629 residues long: Phosphomethylpyrimidine synthase (629 aa).

The disordered stretch occupies residues 1–30 (MTTKLKNASNLSESAQVDQQSVQPFTRSQK). Residues Asn233, Met262, Tyr291, His327, 347 to 349 (SRG), 388 to 391 (DGLR), and Glu427 each bind substrate. His431 lines the Zn(2+) pocket. A substrate-binding site is contributed by Tyr454. His495 lines the Zn(2+) pocket. [4Fe-4S] cluster-binding residues include Cys575, Cys578, and Cys583.

Belongs to the ThiC family. Homodimer. The cofactor is [4Fe-4S] cluster.

The enzyme catalyses 5-amino-1-(5-phospho-beta-D-ribosyl)imidazole + S-adenosyl-L-methionine = 4-amino-2-methyl-5-(phosphooxymethyl)pyrimidine + CO + 5'-deoxyadenosine + formate + L-methionine + 3 H(+). It functions in the pathway cofactor biosynthesis; thiamine diphosphate biosynthesis. Its function is as follows. Catalyzes the synthesis of the hydroxymethylpyrimidine phosphate (HMP-P) moiety of thiamine from aminoimidazole ribotide (AIR) in a radical S-adenosyl-L-methionine (SAM)-dependent reaction. The sequence is that of Phosphomethylpyrimidine synthase from Pseudomonas fluorescens (strain ATCC BAA-477 / NRRL B-23932 / Pf-5).